Consider the following 1847-residue polypeptide: Replication factor C small subunit (1847 aa).

DOD-type homing endonuclease domains follow at residues 179-311, 780-927, and 1348-1508; these read WLGY…RFGI, MLGL…ISGI, and LLGF…EFEV.

The protein belongs to the activator 1 small subunits family. RfcS subfamily. In terms of assembly, heteromultimer composed of small subunits (RfcS) and large subunits (RfcL). In terms of processing, this protein undergoes a protein self splicing that involves a post-translational excision of the intervening region (intein) followed by peptide ligation.

In terms of biological role, part of the RFC clamp loader complex which loads the PCNA sliding clamp onto DNA. The chain is Replication factor C small subunit (rfcS) from Methanocaldococcus jannaschii (strain ATCC 43067 / DSM 2661 / JAL-1 / JCM 10045 / NBRC 100440) (Methanococcus jannaschii).